The chain runs to 477 residues: NADH-quinone oxidoreductase subunit N (477 aa).

Transmembrane regions (helical) follow at residues 7–27, 37–57, 77–97, 109–129, 162–182, 201–221, 233–253, 272–292, 297–317, 323–343, 369–389, 402–424, and 446–466; these read VLAH…LILI, GPMT…LVLG, FMKV…QTYL, ILIL…GLIA, FVLG…IYGF, LGVV…MSTV, GAPT…AIAI, IIVF…IGQT, LMAY…AAGT, GVLA…AAIL, AFFL…AGFF, HLYP…YLRI, and AVLI…GSFV.

Belongs to the complex I subunit 2 family. As to quaternary structure, NDH-1 is composed of 14 different subunits. Subunits NuoA, H, J, K, L, M, N constitute the membrane sector of the complex.

Its subcellular location is the cell inner membrane. The catalysed reaction is a quinone + NADH + 5 H(+)(in) = a quinol + NAD(+) + 4 H(+)(out). NDH-1 shuttles electrons from NADH, via FMN and iron-sulfur (Fe-S) centers, to quinones in the respiratory chain. The immediate electron acceptor for the enzyme in this species is believed to be ubiquinone. Couples the redox reaction to proton translocation (for every two electrons transferred, four hydrogen ions are translocated across the cytoplasmic membrane), and thus conserves the redox energy in a proton gradient. The protein is NADH-quinone oxidoreductase subunit N of Beijerinckia indica subsp. indica (strain ATCC 9039 / DSM 1715 / NCIMB 8712).